A 263-amino-acid polypeptide reads, in one-letter code: Hydroxyethylthiazole kinase 1 (263 aa).

Position 42 (Met-42) interacts with substrate. ATP is bound by residues Lys-118 and Thr-164. Gly-191 serves as a coordination point for substrate.

The protein belongs to the Thz kinase family. The cofactor is Mg(2+).

It catalyses the reaction 5-(2-hydroxyethyl)-4-methylthiazole + ATP = 4-methyl-5-(2-phosphooxyethyl)-thiazole + ADP + H(+). The protein operates within cofactor biosynthesis; thiamine diphosphate biosynthesis; 4-methyl-5-(2-phosphoethyl)-thiazole from 5-(2-hydroxyethyl)-4-methylthiazole: step 1/1. In terms of biological role, catalyzes the phosphorylation of the hydroxyl group of 4-methyl-5-beta-hydroxyethylthiazole (THZ). The polypeptide is Hydroxyethylthiazole kinase 1 (Clostridium botulinum (strain ATCC 19397 / Type A)).